The primary structure comprises 198 residues: Snake venom metalloproteinase BpirMP (198 aa).

The region spanning 1–197 (TYIEVAVVAD…HNPQCILNEP (197 aa)) is the Peptidase M12B domain. The Ca(2+) site is built by Glu-4 and Asp-88. Cystine bridges form between Cys-112–Cys-192, Cys-152–Cys-176, and Cys-154–Cys-159. His-137 serves as a coordination point for Zn(2+). Glu-138 is an active-site residue. Zn(2+) is bound by residues His-141 and His-147. Residues Cys-192 and Asn-195 each coordinate Ca(2+).

This sequence belongs to the venom metalloproteinase (M12B) family. P-I subfamily. As to quaternary structure, monomer. Requires Zn(2+) as cofactor. As to expression, expressed by the venom gland.

It localises to the secreted. With respect to regulation, inhibited by the chelating agents EDTA, EGTA and 1,10-phenanthroline. Is not inhibited by serine proteinase inhibitors aprotinin, leupeptin and benzamidine. Zinc metalloprotease that preferentially degrades Aalpha chain of fibrinogen (FGA) (at a dose of 5 ug, whereas at a dose of 10 ug, both FGA and FGB are completely degraded). Degrades fibrin gel in a dose-dependent manner, as well blood clots formed in vitro (thrombolytic activity). Induces hemorrhage (in the dorsal skin of mice), with an MHD of 50 ug. The basal membrane components collagen (all chains of type IV) (COL4A4), fibronectin (FN1), laminin and nidogen are all degraded by this toxin. In Bothrops pirajai (Piraja's lancehead), this protein is Snake venom metalloproteinase BpirMP.